The sequence spans 75 residues: ATP synthase subunit c (75 aa).

2 helical membrane passes run 8-28 and 52-72; these read FIAIGLAVFGMLGAGLGIANI and IGAAMVEIMGLLAFVLAMLLI.

Belongs to the ATPase C chain family. In terms of assembly, F-type ATPases have 2 components, F(1) - the catalytic core - and F(0) - the membrane proton channel. F(1) has five subunits: alpha(3), beta(3), gamma(1), delta(1), epsilon(1). F(0) has three main subunits: a(1), b(2) and c(10-14). The alpha and beta chains form an alternating ring which encloses part of the gamma chain. F(1) is attached to F(0) by a central stalk formed by the gamma and epsilon chains, while a peripheral stalk is formed by the delta and b chains.

Its subcellular location is the cell membrane. Functionally, f(1)F(0) ATP synthase produces ATP from ADP in the presence of a proton or sodium gradient. F-type ATPases consist of two structural domains, F(1) containing the extramembraneous catalytic core and F(0) containing the membrane proton channel, linked together by a central stalk and a peripheral stalk. During catalysis, ATP synthesis in the catalytic domain of F(1) is coupled via a rotary mechanism of the central stalk subunits to proton translocation. In terms of biological role, key component of the F(0) channel; it plays a direct role in translocation across the membrane. A homomeric c-ring of between 10-14 subunits forms the central stalk rotor element with the F(1) delta and epsilon subunits. This chain is ATP synthase subunit c, found in Wolbachia pipientis wMel.